Consider the following 1353-residue polypeptide: DNA-directed RNA polymerase subunit beta' (1353 aa).

The interval 1–117 is unknown; that stretch reads MSDNRLFTSV…AFQKLNDLFK (117 aa). The interval 118–1353 is DNA-directed RNA polymerase subunit beta'; the sequence is LYNHFPSISS…SELAEKTNQN (1236 aa). Zn(2+) contacts are provided by Cys-189, Cys-191, Cys-203, and Cys-206. The Mg(2+) site is built by Asp-578, Asp-580, and Asp-582.

The protein belongs to the RNA polymerase beta' chain family. In terms of assembly, the RNAP catalytic core consists of 2 alpha, 1 beta, 1 beta' and 1 omega subunit. When a sigma factor is associated with the core the holoenzyme is formed, which can initiate transcription. Mg(2+) serves as cofactor. It depends on Zn(2+) as a cofactor.

It catalyses the reaction RNA(n) + a ribonucleoside 5'-triphosphate = RNA(n+1) + diphosphate. In terms of biological role, DNA-dependent RNA polymerase catalyzes the transcription of DNA into RNA using the four ribonucleoside triphosphates as substrates. The polypeptide is DNA-directed RNA polymerase subunit beta' (Onion yellows phytoplasma (strain OY-M)).